The following is a 137-amino-acid chain: MGLLSEFKAFAVKGNVVDMAVGIIIGAAFGKIVSSFVGDVIMPPIGLLIGGVDFSDLAITLKAAEGDVPAVVLAYGKFIQTVLDFVIVAFAIFMGVKAINRLKREEAVAPSEPPVPSAEETLLTEIRDLLKAQQNKS.

2 helical membrane-spanning segments follow: residues 9 to 29 and 79 to 99; these read AFAV…GAAF and IQTV…VKAI.

The protein belongs to the MscL family. As to quaternary structure, homopentamer.

The protein localises to the cell inner membrane. In terms of biological role, channel that opens in response to stretch forces in the membrane lipid bilayer. May participate in the regulation of osmotic pressure changes within the cell. The sequence is that of Large-conductance mechanosensitive channel from Pseudomonas aeruginosa (strain ATCC 15692 / DSM 22644 / CIP 104116 / JCM 14847 / LMG 12228 / 1C / PRS 101 / PAO1).